The chain runs to 205 residues: Holliday junction branch migration complex subunit RuvA (205 aa).

Residues 1–62 are domain I; sequence MFEYVTGYVE…EDIMALYGFK (62 aa). Residues 63 to 141 form a domain II region; it reads TREERLLFTK…DVVPDVFVDL (79 aa). The segment at 142–152 is flexible linker; it reads FSDEERFDEKK. Positions 153-205 are domain III; the sequence is GSSTELDEALEALRALGYAEREINRVLPELLKESLTTDQYIKKALSLLLNGKR.

Belongs to the RuvA family. In terms of assembly, homotetramer. Forms an RuvA(8)-RuvB(12)-Holliday junction (HJ) complex. HJ DNA is sandwiched between 2 RuvA tetramers; dsDNA enters through RuvA and exits via RuvB. An RuvB hexamer assembles on each DNA strand where it exits the tetramer. Each RuvB hexamer is contacted by two RuvA subunits (via domain III) on 2 adjacent RuvB subunits; this complex drives branch migration. In the full resolvosome a probable DNA-RuvA(4)-RuvB(12)-RuvC(2) complex forms which resolves the HJ.

It is found in the cytoplasm. Its function is as follows. The RuvA-RuvB-RuvC complex processes Holliday junction (HJ) DNA during genetic recombination and DNA repair, while the RuvA-RuvB complex plays an important role in the rescue of blocked DNA replication forks via replication fork reversal (RFR). RuvA specifically binds to HJ cruciform DNA, conferring on it an open structure. The RuvB hexamer acts as an ATP-dependent pump, pulling dsDNA into and through the RuvAB complex. HJ branch migration allows RuvC to scan DNA until it finds its consensus sequence, where it cleaves and resolves the cruciform DNA. In Bacillus cytotoxicus (strain DSM 22905 / CIP 110041 / 391-98 / NVH 391-98), this protein is Holliday junction branch migration complex subunit RuvA.